The chain runs to 360 residues: Photosystem II protein D1 (360 aa).

3 helical membrane-spanning segments follow: residues 29-46, 118-133, and 142-156; these read YIGW…TATT, HFLL…EWEL, and WIFV…AASA. Histidine 118 contributes to the chlorophyll a binding site. Residue tyrosine 126 coordinates pheophytin a. Residues aspartate 170 and glutamate 189 each contribute to the [CaMn4O5] cluster site. Residues 197–218 form a helical membrane-spanning segment; sequence FHMAGVAGVFGGSLFSAMHGSL. Histidine 198 serves as a coordination point for chlorophyll a. Residues histidine 215 and 264–265 each bind a quinone; that span reads SF. Residue histidine 215 participates in Fe cation binding. Histidine 272 lines the Fe cation pocket. The chain crosses the membrane as a helical span at residues 274-288; sequence FLAAWPVVRIWLTAL. 4 residues coordinate [CaMn4O5] cluster: histidine 332, glutamate 333, aspartate 342, and alanine 344. Residues 345-360 constitute a propeptide that is removed on maturation; it reads AGEVLPVAVSAPAVHA.

Belongs to the reaction center PufL/M/PsbA/D family. As to quaternary structure, PSII is composed of 1 copy each of membrane proteins PsbA, PsbB, PsbC, PsbD, PsbE, PsbF, PsbH, PsbI, PsbJ, PsbK, PsbL, PsbM, PsbT, PsbX, PsbY, PsbZ, Psb30/Ycf12, at least 3 peripheral proteins of the oxygen-evolving complex and a large number of cofactors. It forms dimeric complexes. The D1/D2 heterodimer binds P680, chlorophylls that are the primary electron donor of PSII, and subsequent electron acceptors. It shares a non-heme iron and each subunit binds pheophytin, quinone, additional chlorophylls, carotenoids and lipids. D1 provides most of the ligands for the Mn4-Ca-O5 cluster of the oxygen-evolving complex (OEC). There is also a Cl(-1) ion associated with D1 and D2, which is required for oxygen evolution. The PSII complex binds additional chlorophylls, carotenoids and specific lipids. serves as cofactor. Post-translationally, tyr-161 forms a radical intermediate that is referred to as redox-active TyrZ, YZ or Y-Z. C-terminally processed by CTPA; processing is essential to allow assembly of the oxygen-evolving complex and thus photosynthetic growth.

It is found in the plastid. It localises to the chloroplast thylakoid membrane. It carries out the reaction 2 a plastoquinone + 4 hnu + 2 H2O = 2 a plastoquinol + O2. Photosystem II (PSII) is a light-driven water:plastoquinone oxidoreductase that uses light energy to abstract electrons from H(2)O, generating O(2) and a proton gradient subsequently used for ATP formation. It consists of a core antenna complex that captures photons, and an electron transfer chain that converts photonic excitation into a charge separation. The D1/D2 (PsbA/PsbD) reaction center heterodimer binds P680, the primary electron donor of PSII as well as several subsequent electron acceptors. This Bumilleriopsis filiformis (Yellow-green alga) protein is Photosystem II protein D1.